A 591-amino-acid chain; its full sequence is L-lactate dehydrogenase (cytochrome) (591 aa).

The N-terminal 80 residues, 1-80 (MLKYKPLLKI…LNWHNGQIDN (80 aa)), are a transit peptide targeting the mitochondrion. One can recognise a Cytochrome b5 heme-binding domain in the interval 88–165 (KQKISPAEVA…APEKKLGPLQ (78 aa)). Residues histidine 123, histidine 146, tyrosine 177, glutamine 219, and tyrosine 223 each contribute to the heme b site. Residues 197-563 (PPLDNIINLY…KPDLLDLSTL (367 aa)) enclose the FMN hydroxy acid dehydrogenase domain. Tyrosine 223 provides a ligand contact to pyruvate. Residues 275–278 (SATA), serine 308, and glutamine 332 contribute to the FMN site. Position 334 (tyrosine 334) interacts with pyruvate. Threonine 360 contributes to the FMN binding site. Heme b is bound at residue lysine 376. Position 429 (lysine 429) interacts with FMN. Pyruvate contacts are provided by histidine 453 and arginine 456. The active-site Proton acceptor is histidine 453. FMN is bound by residues 489-493 (DGGVR) and 512-513 (GR).

It in the N-terminal section; belongs to the cytochrome b5 family. In the C-terminal section; belongs to the FMN-dependent alpha-hydroxy acid dehydrogenase family. In terms of assembly, homotetramer. The cofactor is FMN. Heme b serves as cofactor.

It localises to the mitochondrion intermembrane space. The enzyme catalyses (S)-lactate + 2 Fe(III)-[cytochrome c] = 2 Fe(II)-[cytochrome c] + pyruvate + 2 H(+). Functionally, catalyzes the oxidation of (S)-lactate (L-lactate) to pyruvate with subsequent transfer of electrons to cytochrome c. Is involved in the utilization of (S)-lactate as a sole source of carbon for growth. Can also use ferricyanide as an electron acceptor in vitro. This is L-lactate dehydrogenase (cytochrome) (CYB2) from Saccharomyces cerevisiae (strain ATCC 204508 / S288c) (Baker's yeast).